A 63-amino-acid chain; its full sequence is MKIFGLFLLIATYMALAFAGEDVCIPSGQKCGPYMNMGCCKGLVCMSYAARCVSMGGIPRMHI.

A signal peptide spans Met1 to Ala19. Disulfide bonds link Cys24-Cys40, Cys31-Cys45, and Cys39-Cys52.

The protein belongs to the venom Ptu1-like knottin family. As to expression, expressed by the venom gland.

It localises to the secreted. In terms of biological role, binds reversibly and blocks P/Q-type voltage-gated calcium channels (Cav). This chain is U-reduvitoxin-Pr4a, found in Platymeris rhadamanthus (Red spot assassin bug).